The sequence spans 311 residues: Porphobilinogen deaminase (311 aa).

An S-(dipyrrolylmethanemethyl)cysteine modification is found at Cys-241.

Belongs to the HMBS family. In terms of assembly, monomer. Dipyrromethane serves as cofactor.

The catalysed reaction is 4 porphobilinogen + H2O = hydroxymethylbilane + 4 NH4(+). It functions in the pathway porphyrin-containing compound metabolism; protoporphyrin-IX biosynthesis; coproporphyrinogen-III from 5-aminolevulinate: step 2/4. Its function is as follows. Tetrapolymerization of the monopyrrole PBG into the hydroxymethylbilane pre-uroporphyrinogen in several discrete steps. This chain is Porphobilinogen deaminase, found in Campylobacter curvus (strain 525.92).